A 332-amino-acid polypeptide reads, in one-letter code: Casein kinase II subunit alpha (332 aa).

The region spanning 43-327 (YEIIRKVGRG…TCQEAMAHPY (285 aa)) is the Protein kinase domain. ATP is bound by residues 49-57 (VGRGKYSEV) and lysine 72. Residue aspartate 160 is the Proton acceptor of the active site.

This sequence belongs to the protein kinase superfamily. Ser/Thr protein kinase family. CK2 subfamily. Tetramer composed of two alpha chains, one beta chain and one beta' chain.

The catalysed reaction is L-seryl-[protein] + ATP = O-phospho-L-seryl-[protein] + ADP + H(+). The enzyme catalyses L-threonyl-[protein] + ATP = O-phospho-L-threonyl-[protein] + ADP + H(+). Catalytic subunit of a constitutively active serine/threonine-protein kinase complex that phosphorylates a large number of substrates containing acidic residues C-terminal to the phosphorylated serine or threonine. The sequence is that of Casein kinase II subunit alpha from Schizosaccharomyces pombe (strain 972 / ATCC 24843) (Fission yeast).